We begin with the raw amino-acid sequence, 124 residues long: Ribonuclease pancreatic (124 aa).

Residues 1–13 are compositionally biased toward basic and acidic residues; the sequence is KETSAQKFERQHM. The tract at residues 1 to 25 is disordered; that stretch reads KETSAQKFERQHMDSTGSSSSSPTY. The substrate site is built by K7 and R10. The active-site Proton acceptor is the H12. 4 cysteine pairs are disulfide-bonded: C26/C84, C40/C95, C58/C110, and C65/C72. Substrate-binding positions include 41–45, K66, and R85; that span reads KPVNT. H119 functions as the Proton donor in the catalytic mechanism.

Belongs to the pancreatic ribonuclease family. In terms of assembly, monomer. Interacts with and forms tight 1:1 complexes with RNH1. Dimerization of two such complexes may occur. Interaction with RNH1 inhibits this protein. As to expression, pancreas.

It localises to the secreted. The enzyme catalyses an [RNA] containing cytidine + H2O = an [RNA]-3'-cytidine-3'-phosphate + a 5'-hydroxy-ribonucleotide-3'-[RNA].. It catalyses the reaction an [RNA] containing uridine + H2O = an [RNA]-3'-uridine-3'-phosphate + a 5'-hydroxy-ribonucleotide-3'-[RNA].. Functionally, endonuclease that catalyzes the cleavage of RNA on the 3' side of pyrimidine nucleotides. Acts on single-stranded and double-stranded RNA. The chain is Ribonuclease pancreatic (RNASE1) from Ondatra zibethicus (Muskrat).